The chain runs to 70 residues: Large ribosomal subunit protein eL38 (70 aa).

It belongs to the eukaryotic ribosomal protein eL38 family.

The polypeptide is Large ribosomal subunit protein eL38 (RpL38) (Anopheles gambiae (African malaria mosquito)).